A 205-amino-acid chain; its full sequence is IQ domain-containing protein F1 (205 aa).

Basic and acidic residues-rich tracts occupy residues 1–24 (MEEK…KEMP) and 51–68 (ANEK…LSDK). The tract at residues 1 to 68 (MEEKQPQKTK…PENQKKLSDK (68 aa)) is disordered. IQ domains lie at 68 to 97 (KDTV…SACI) and 124 to 153 (KEWA…AVRI).

Interacts with calmodulin.

It localises to the cytoplasmic vesicle. It is found in the secretory vesicle. The protein localises to the acrosome. Its function is as follows. Involved in sperm capacitation and acrosome reaction. In Homo sapiens (Human), this protein is IQ domain-containing protein F1.